The primary structure comprises 268 residues: Small ribosomal subunit protein eS1 (268 aa).

The interval 1-21 (MAVGKNKGLSKGGKKGGKKKV) is disordered.

The protein belongs to the eukaryotic ribosomal protein eS1 family. In terms of assembly, component of the small ribosomal subunit. Mature ribosomes consist of a small (40S) and a large (60S) subunit. The 40S subunit contains about 33 different proteins and 1 molecule of RNA (18S). The 60S subunit contains about 49 different proteins and 3 molecules of RNA (28S, 5.8S and 5S).

It is found in the cytoplasm. Essential for oogenesis; required for late follicle cell development. In Drosophila sechellia (Fruit fly), this protein is Small ribosomal subunit protein eS1.